The primary structure comprises 448 residues: MAEASATGACGEAMAAAEGSSGPAGLTLGRSFSNYRPFEPQALGLSPSWRLTGFSGMKGUGCKVPQEALLKLLAGLTRPDVRPPLGRGLVGGQEEASQEAGLPAGAGPSPTFPALGIGMDSCVIPLRHGGLSLVQTTDFFYPLVEDPYMMGRIACANVLSDLYAMGITECDNMLMLLSVSQSMSEEEREKVTPLMVKGFRDAAEEGGTAVTGGQTVVNPWIIIGGVATVVCQPNEFIMPDSAVVGDVLVLTKPLGTQVAVNAHQWLDNPERWNKVKMVVSREEVELAYQEAMFNMATLNRTAAGLMHTFNAHAATDITGFGILGHSQNLAKQQRNEVSFVIHNLPIIAKMAAVSKASGRFGLLQGTSAETSGGLLICLPREQAARFCSEIKSSKYGEGHQAWIVGIVEKGNRTARIIDKPRVIEVLPRGATAAVLAPDSSNASSEPSS.

An N-acetylalanine modification is found at Ala2. Ser46 carries the post-translational modification Phosphoserine. The active site involves Sec60. Sec60 is a non-standard amino acid (selenocysteine). Lys63 provides a ligand contact to ATP. The disordered stretch occupies residues Leu85–Gly107. Ser97 bears the Phosphoserine mark. ATP-binding positions include Gly118–Asp120, Asp138, Asp161, and Gly212–Thr215. Residue Asp120 participates in Mg(2+) binding. Position 161 (Asp161) interacts with Mg(2+). Asp316 lines the Mg(2+) pocket.

The protein belongs to the selenophosphate synthase 1 family. Class I subfamily. As to quaternary structure, homodimer. Mg(2+) is required as a cofactor. Truncated SEPHS2 proteins produced by failed UGA/Sec decoding are ubiquitinated by the CRL2(KLHDC3) complex, which recognizes the glycine (Gly) at the C-terminus of truncated SEPHS2 proteins.

The catalysed reaction is hydrogenselenide + ATP + H2O = selenophosphate + AMP + phosphate + 2 H(+). Its function is as follows. Synthesizes selenophosphate from selenide and ATP. In Homo sapiens (Human), this protein is Selenide, water dikinase 2 (SEPHS2).